We begin with the raw amino-acid sequence, 129 residues long: Large ribosomal subunit protein bL20 (129 aa).

Belongs to the bacterial ribosomal protein bL20 family.

Its function is as follows. Binds directly to 23S ribosomal RNA and is necessary for the in vitro assembly process of the 50S ribosomal subunit. It is not involved in the protein synthesizing functions of that subunit. The sequence is that of Large ribosomal subunit protein bL20 from Mycolicibacterium gilvum (strain PYR-GCK) (Mycobacterium gilvum (strain PYR-GCK)).